Reading from the N-terminus, the 55-residue chain is Small integral membrane protein 11 (55 aa).

A helical transmembrane segment spans residues 9–29 (VPLLLYILAAKTLILCLAFAG). The stretch at 34 to 54 (QRRSLEGKLQAEKRKQSEKKA) forms a coiled coil.

As to expression, expressed in brain, heart, kidney, thymus, liver, stomach, muscle, lung, testis, ovary, skin and eye.

The protein resides in the membrane. This is Small integral membrane protein 11 from Mus musculus (Mouse).